The primary structure comprises 43 residues: Protein PsbN (43 aa).

Residues Thr5–Phe27 form a helical membrane-spanning segment.

Belongs to the PsbN family.

The protein resides in the plastid. The protein localises to the chloroplast thylakoid membrane. Functionally, may play a role in photosystem I and II biogenesis. This chain is Protein PsbN, found in Coelogyne cristata (Orchid).